A 488-amino-acid chain; its full sequence is Probable metabolite transport protein YBR241C (488 aa).

The Cytoplasmic segment spans residues 1–18 (MAETERLMPNGGSRETKP). Residues 19–39 (LITGHLILGTIVACLGSIQYG) form a helical membrane-spanning segment. Topologically, residues 40–87 (YHIAELNAPQEFLSCSRFEAPDENISYDDTWVGQHGLKQCIALTDSQY) are vacuolar. N63 is a glycosylation site (N-linked (GlcNAc...) asparagine). A helical membrane pass occupies residues 88 to 108 (GAITSIFSIGGLFGSYYAGNW). Over 109-121 (ANRYGRKYVSMGA) the chain is Cytoplasmic. Residues 122-142 (SAMCMVSSLLLFFSNSYLQLL) traverse the membrane as a helical segment. The Vacuolar portion of the chain corresponds to 143 to 146 (FGRF). The chain crosses the membrane as a helical span at residues 147-167 (LVGMSCGTAIVITPLFINEIA). Topologically, residues 168–178 (PVEWRGAMGSM) are cytoplasmic. Residues 179–198 (NQVSINLGILLTQTLALKYA) form a helical membrane-spanning segment. Over 199-204 (DSYNWR) the chain is Vacuolar. A helical transmembrane segment spans residues 205 to 225 (WLLFSGSVIAVANILAWLKVD). Residues 226-299 (ESPRWLVSHG…DPSYKKPRTV (74 aa)) lie on the Cytoplasmic side of the membrane. Over residues 258 to 279 (EIQDWQRSHGHNRDPESSEETH) the composition is skewed to basic and acidic residues. Residues 258-281 (EIQDWQRSHGHNRDPESSEETHSG) form a disordered region. The chain crosses the membrane as a helical span at residues 300-320 (ILAILSCQQFCGINSIIFYGV). Topologically, residues 321-322 (KV) are vacuolar. A helical membrane pass occupies residues 323 to 337 (IGKILPDYSIQVNFA). The Cytoplasmic segment spans residues 338 to 344 (ISILNVV). The chain crosses the membrane as a helical span at residues 345-364 (VTLAASAIIDHVGRRPLLLA). Residues 365 to 390 (STTVMTAMSLLISVGLTLSVSFLLVT) are Vacuolar-facing. A helical membrane pass occupies residues 391 to 411 (ATFVYIAAFAIGLGPIPFLII). Residues 412-419 (GELSYPQD) lie on the Cytoplasmic side of the membrane. A helical membrane pass occupies residues 420-442 (AATAQSFGTVCNWLATFIVGYLF). The Vacuolar segment spans residues 443–446 (PIGH). The chain crosses the membrane as a helical span at residues 447 to 463 (GLMGGYVFAIFAAIAAM). Over 464–488 (FATYVYKRVPETKGKTTYSEVWAGY) the chain is Cytoplasmic.

The protein belongs to the major facilitator superfamily. Sugar transporter (TC 2.A.1.1) family.

Its subcellular location is the vacuole membrane. This chain is Probable metabolite transport protein YBR241C, found in Saccharomyces cerevisiae (strain ATCC 204508 / S288c) (Baker's yeast).